Here is a 31-residue protein sequence, read N- to C-terminus: leu operon leader peptide (31 aa).

Involved in control of the biosynthesis of leucine. This is leu operon leader peptide (leuL) from Buchnera aphidicola subsp. Rhopalosiphum padi.